A 283-amino-acid chain; its full sequence is Thymidylate synthase (283 aa).

Arginine 22 contacts dUMP. Catalysis depends on cysteine 160, which acts as the Nucleophile. DUMP is bound by residues 180–183 (RSCD), asparagine 191, and 221–223 (HIY). Aspartate 183 provides a ligand contact to (6R)-5,10-methylene-5,6,7,8-tetrahydrofolate. Serine 282 is a (6R)-5,10-methylene-5,6,7,8-tetrahydrofolate binding site.

Belongs to the thymidylate synthase family. Bacterial-type ThyA subfamily. In terms of assembly, homodimer.

It is found in the cytoplasm. The enzyme catalyses dUMP + (6R)-5,10-methylene-5,6,7,8-tetrahydrofolate = 7,8-dihydrofolate + dTMP. The protein operates within pyrimidine metabolism; dTTP biosynthesis. Catalyzes the reductive methylation of 2'-deoxyuridine-5'-monophosphate (dUMP) to 2'-deoxythymidine-5'-monophosphate (dTMP) while utilizing 5,10-methylenetetrahydrofolate (mTHF) as the methyl donor and reductant in the reaction, yielding dihydrofolate (DHF) as a by-product. This enzymatic reaction provides an intracellular de novo source of dTMP, an essential precursor for DNA biosynthesis. This chain is Thymidylate synthase, found in Vibrio vulnificus (strain YJ016).